The sequence spans 291 residues: Meteorin (291 aa).

Positions 1–21 are cleaved as a signal peptide; sequence MLVATLLCALCCGLLAASAHA. Intrachain disulfides connect C28/C49, C80/C116, C169/C240, C172/C264, and C182/C286.

Belongs to the meteorin family. In terms of assembly, monomer. Highly expressed in brain. Expressed in undifferentiated neural progenitors and in astrocyte lineage, particularly in Bergmann glia, a subtype of radial glia, and a few discrete neuronal populations residing in the superior colliculus, the ocular motor nucleus, the raphe and pontine nuclei, and in various thalamic nuclei. Weakly expressed in heart, kidney, skeletal muscle, spleen, testis, gut and lung.

Its subcellular location is the secreted. Its function is as follows. Involved in both glial cell differentiation and axonal network formation during neurogenesis. Promotes astrocyte differentiation and transforms cerebellar astrocytes into radial glia. Also induces axonal extension in small and intermediate neurons of sensory ganglia by activating nearby satellite glia. The chain is Meteorin (Metrn) from Mus musculus (Mouse).